Reading from the N-terminus, the 501-residue chain is Ribose import ATP-binding protein RbsA (501 aa).

2 consecutive ABC transporter domains span residues 5–241 and 252–495; these read LQLK…VGRK and APGD…VGKL. Residue 37 to 44 coordinates ATP; the sequence is GENGAGKS.

This sequence belongs to the ABC transporter superfamily. Ribose importer (TC 3.A.1.2.1) family. The complex is composed of an ATP-binding protein (RbsA), two transmembrane proteins (RbsC) and a solute-binding protein (RbsB).

It is found in the cell inner membrane. It catalyses the reaction D-ribose(out) + ATP + H2O = D-ribose(in) + ADP + phosphate + H(+). Functionally, part of the ABC transporter complex RbsABC involved in ribose import. Responsible for energy coupling to the transport system. In Escherichia coli (strain UTI89 / UPEC), this protein is Ribose import ATP-binding protein RbsA.